A 698-amino-acid chain; its full sequence is Polyphosphate kinase (698 aa).

Residue N63 coordinates ATP. The Mg(2+) site is built by R390 and R420. The active-site Phosphohistidine intermediate is the H450. Residues Y483, R579, and H607 each contribute to the ATP site.

The protein belongs to the polyphosphate kinase 1 (PPK1) family. Requires Mg(2+) as cofactor. Post-translationally, an intermediate of this reaction is the autophosphorylated ppk in which a phosphate is covalently linked to a histidine residue through a N-P bond.

The enzyme catalyses [phosphate](n) + ATP = [phosphate](n+1) + ADP. In terms of biological role, catalyzes the reversible transfer of the terminal phosphate of ATP to form a long-chain polyphosphate (polyP). In Xylella fastidiosa (strain 9a5c), this protein is Polyphosphate kinase.